The sequence spans 293 residues: Pyridoxal 5'-phosphate synthase subunit PdxS (293 aa).

Asp23 is a D-ribose 5-phosphate binding site. Lys80 functions as the Schiff-base intermediate with D-ribose 5-phosphate in the catalytic mechanism. Gly152 lines the D-ribose 5-phosphate pocket. Arg164 lines the D-glyceraldehyde 3-phosphate pocket. D-ribose 5-phosphate contacts are provided by residues Gly213 and 234–235 (GS).

It belongs to the PdxS/SNZ family. In terms of assembly, in the presence of PdxT, forms a dodecamer of heterodimers.

The enzyme catalyses aldehydo-D-ribose 5-phosphate + D-glyceraldehyde 3-phosphate + L-glutamine = pyridoxal 5'-phosphate + L-glutamate + phosphate + 3 H2O + H(+). It functions in the pathway cofactor biosynthesis; pyridoxal 5'-phosphate biosynthesis. Functionally, catalyzes the formation of pyridoxal 5'-phosphate from ribose 5-phosphate (RBP), glyceraldehyde 3-phosphate (G3P) and ammonia. The ammonia is provided by the PdxT subunit. Can also use ribulose 5-phosphate and dihydroxyacetone phosphate as substrates, resulting from enzyme-catalyzed isomerization of RBP and G3P, respectively. The protein is Pyridoxal 5'-phosphate synthase subunit PdxS of Dehalococcoides mccartyi (strain ATCC BAA-2266 / KCTC 15142 / 195) (Dehalococcoides ethenogenes (strain 195)).